The chain runs to 370 residues: MNRRKNDFLVRPKRIRCYTQLSTLPIDLIIEILSRLPMNSIAICRLVSKQWASILQSSDFTESFLIKSPPRPRLLFTIRYGSKWHLFSAPQPRNFDENFPVVATDYHKGFSGNWCMQSFQLVNGFIYLNNRLSLKGKIDRVSVIWNPSTGQQIPLPDLGVKNSHSKSFFGYDPIEKQFKVLCITSSKEHQVLTLGTGRKLSWRKIEYSYPHYPRKKSNGICINGVLYYRNTNAMIVRFDVRSEEFRFVEIKMYVEILSLINYKGKLGVLFPNTDLAQLWVLDDTNKVEWSKHNFVFPDTTFEAIRATDTGEMFCASSCWRDSLYVSYYDLEKESVKKVKIKGIEDKLSIGKHHANEFFIFPNHVENVMVL.

One can recognise an F-box domain in the interval 18–64 (YTQLSTLPIDLIIEILSRLPMNSIAICRLVSKQWASILQSSDFTESF).

The polypeptide is Putative F-box protein At1g46984 (Arabidopsis thaliana (Mouse-ear cress)).